The primary structure comprises 518 residues: Zinc finger protein 449 (518 aa).

Residues Arg-30–Leu-112 enclose the SCAN box domain. Residues Asn-292 to Leu-304 are compositionally biased toward polar residues. Residues Asn-292–Cys-325 are disordered. C2H2-type zinc fingers lie at residues His-323–His-345, His-351–His-373, Tyr-379–His-401, Tyr-407–His-429, His-435–His-457, Phe-463–His-485, and Tyr-491–His-513.

It belongs to the krueppel C2H2-type zinc-finger protein family.

It is found in the nucleus. Functionally, may be involved in transcriptional regulation. The polypeptide is Zinc finger protein 449 (ZNF449) (Homo sapiens (Human)).